Here is a 287-residue protein sequence, read N- to C-terminus: Cbb3-type cytochrome c oxidase subunit FixPc (287 aa).

The Cytoplasmic segment spans residues 1-36 (MSEKHIDEFSGVETTGHEWDGIRELNNPMPRWWVWT). Residues 37-57 (FYATIVWALGYAIAYPAIPMI) form a helical membrane-spanning segment. Residues 58–287 (TDATKGMLGF…IFVHSLGGGT (230 aa)) lie on the Periplasmic side of the membrane. Cytochrome c domains lie at 108–196 (FAIA…WGLT) and 203–284 (GLAE…HSLG). The heme c site is built by cysteine 121, cysteine 124, histidine 125, methionine 173, cysteine 216, cysteine 219, histidine 220, and methionine 261.

It belongs to the CcoP / FixP family. In terms of assembly, component of the cbb3-type cytochrome c oxidase at least composed of FixN, FixO, FixQ and FixP. Heme c is required as a cofactor.

It localises to the cell inner membrane. It participates in energy metabolism; oxidative phosphorylation. Its function is as follows. C-type cytochrome. Part of the cbb3-type cytochrome c oxidase complex. FixP subunit is required for transferring electrons from donor cytochrome c via its heme groups to FixO subunit. From there, electrons are shuttled to the catalytic binuclear center of FixN subunit where oxygen reduction takes place. The complex also functions as a proton pump. This chain is Cbb3-type cytochrome c oxidase subunit FixPc, found in Rhizobium leguminosarum bv. viciae.